The following is a 1742-amino-acid chain: Meiosis regulator and mRNA stability factor 1 (1742 aa).

Serine 65 carries the post-translational modification Phosphoserine. Positions 351 to 488 (IGVFWDIENC…ALLHHANELI (138 aa)) constitute an NYN domain. Disordered stretches follow at residues 620–642 (PSSAKAAPGKGSQANSGSATRNA) and 655–721 (SKTG…KEKE). Positions 631–642 (SQANSGSATRNA) are enriched in polar residues. Over residues 673–689 (APPHRSSSAAAPAPKAP) the composition is skewed to low complexity. Tyrosine 696 bears the Phosphotyrosine mark. Serine 757 bears the Phosphoserine mark. In terms of domain architecture, RRM spans 788–867 (VDVQISNLDY…KKILVSLATG (80 aa)). 2 HTH OST-type domains span residues 872 to 946 (SLSL…SPLG) and 1000 to 1077 (SLKT…HNKP). A phosphoserine mark is found at serine 1089 and serine 1091. HTH OST-type domains are found at residues 1097 to 1171 (QLIQ…LTHR), 1173 to 1247 (QVKR…CIPR), 1257 to 1332 (RTKQ…TEVE), 1333 to 1408 (RFKA…INRK), 1409 to 1484 (SLRA…CVKL), and 1486 to 1560 (SLYL…LKND). Phosphoserine is present on serine 1571. The disordered stretch occupies residues 1678–1729 (IRNENLPPDPSSPGVSAAVPAPPSPSSETPESLLSKDPTESPAKKQPKNRVK). Positions 1703 to 1712 (SSETPESLLS) are enriched in low complexity.

In terms of assembly, interacts with LIMK2.

The protein resides in the peroxisome. In terms of biological role, essential regulator of oogenesis required for female meiotic progression to repress transposable elements and preventing their mobilization, which is essential for the germline integrity. Probably acts via some RNA metabolic process, equivalent to the piRNA system in males, which mediates the repression of transposable elements during meiosis by forming complexes composed of RNAs and governs the methylation and subsequent repression of transposons. Also required to protect from DNA double-strand breaks. The polypeptide is Meiosis regulator and mRNA stability factor 1 (Bos taurus (Bovine)).